The following is a 1106-amino-acid chain: Protein transport protein Sec31A (1106 aa).

WD repeat units follow at residues 4–47, 68–111, 120–160, 166–206, 209–254, 258–298, and 301–342; these read KEVD…EIFE, RYHK…AGDK, KHTG…TPMT, QPPE…PIIK, DHSN…SPLR, NHAR…VLYE, and TNTQ…DGLR. The interaction with SEC13 stretch occupies residues 161-471; the sequence is PGAKTQPPED…IDASQTEFEK (311 aa). A WD 8; interaction with SEC13 repeat occupies 397-430; sequence SFSFGGKLVTFENVRMPSHQGAEQQQQQHHVFIS. 2 positions are modified to phosphoserine: serine 527 and serine 532. Lysine 647 is covalently cross-linked (Glycyl lysine isopeptide (Lys-Gly) (interchain with G-Cter in ubiquitin)). Serine 799 is modified (phosphoserine). Residues 800 to 999 form an interaction with PDCD6 region; sequence PKIPYEEQQL…TKKITKKPIP (200 aa). The ALG-2-binding site motif-2 (ABS-2) signature appears at 842–848; sequence GFIMHGN. Residues 859–980 form a disordered region; sequence TSPGHMHTQV…EGAPGAPIGN (122 aa). Polar residues predominate over residues 917–939; it reads PQSQMLQQQPSAPVPLSSQSSFP. The residue at position 1047 (threonine 1047) is a Phosphothreonine. Serine 1049 is modified (phosphoserine). Lysine 1103 participates in a covalent cross-link: Glycyl lysine isopeptide (Lys-Gly) (interchain with G-Cter in ubiquitin).

Belongs to the WD repeat SEC31 family. In terms of assembly, COPII is composed of at least 5 proteins: the SEC23/24 complex, the SEC13/31 complex and SAR1. SEC13 and SEC31 make a 2:2 tetramer that forms the edge element of the COPII outer coat. The tetramer self-assembles in multiple copies to form the complete polyhedral cage. Interacts (via WD 8) with SEC13. Interacts with PDCD6; interaction takes place in response to cytosolic calcium increase and leads to bridge together the BCR(KLHL12) complex and SEC31A, leading to monoubiquitination. Interacts with KLHL12. In terms of processing, monoubiquitinated by the BCR(KLHL12) E3 ubiquitin ligase complex, leading to regulate the size of COPII coats.

The protein resides in the cytoplasm. Its subcellular location is the cytoplasmic vesicle. It is found in the COPII-coated vesicle membrane. It localises to the endoplasmic reticulum membrane. Functionally, component of the coat protein complex II (COPII) which promotes the formation of transport vesicles from the endoplasmic reticulum (ER). The coat has two main functions, the physical deformation of the endoplasmic reticulum membrane into vesicles and the selection of cargo molecules. The sequence is that of Protein transport protein Sec31A (SEC31A) from Pongo abelii (Sumatran orangutan).